A 134-amino-acid chain; its full sequence is Small ribosomal subunit protein uS11 (134 aa).

It belongs to the universal ribosomal protein uS11 family. As to quaternary structure, part of the 30S ribosomal subunit. Interacts with proteins S7 and S18. Binds to IF-3.

Its function is as follows. Located on the platform of the 30S subunit, it bridges several disparate RNA helices of the 16S rRNA. Forms part of the Shine-Dalgarno cleft in the 70S ribosome. The chain is Small ribosomal subunit protein uS11 from Corynebacterium diphtheriae (strain ATCC 700971 / NCTC 13129 / Biotype gravis).